A 490-amino-acid chain; its full sequence is ATP synthase subunit beta, chloroplastic (490 aa).

Gly-170–Thr-177 lines the ATP pocket.

This sequence belongs to the ATPase alpha/beta chains family. In terms of assembly, F-type ATPases have 2 components, CF(1) - the catalytic core - and CF(0) - the membrane proton channel. CF(1) has five subunits: alpha(3), beta(3), gamma(1), delta(1), epsilon(1). CF(0) has four main subunits: a(1), b(1), b'(1) and c(9-12).

It is found in the plastid. Its subcellular location is the chloroplast thylakoid membrane. It carries out the reaction ATP + H2O + 4 H(+)(in) = ADP + phosphate + 5 H(+)(out). In terms of biological role, produces ATP from ADP in the presence of a proton gradient across the membrane. The catalytic sites are hosted primarily by the beta subunits. The chain is ATP synthase subunit beta, chloroplastic from Ipomoea setosa (Brazilian morning glory).